The chain runs to 349 residues: Probable inactive tRNA-specific adenosine deaminase-like protein 3 (349 aa).

Met-1 carries the N-acetylmethionine modification. The tract at residues 1–25 (MEPTSGFAEQPGPVKAESEEQEPAQ) is disordered. The 164-residue stretch at 171-334 (AAMQTHMERA…PDLNHRFQVF (164 aa)) folds into the CMP/dCMP-type deaminase domain. Positions 223, 289, and 292 each coordinate Zn(2+).

It belongs to the cytidine and deoxycytidylate deaminase family. ADAT3 subfamily. Requires Zn(2+) as cofactor.

The chain is Probable inactive tRNA-specific adenosine deaminase-like protein 3 (Adat3) from Mus musculus (Mouse).